A 313-amino-acid chain; its full sequence is 3'-5' exoribonuclease YhaM (313 aa).

An HD domain is found at 163–279; sequence HVVSMLRLAK…LHQIDLMDAS (117 aa).

It belongs to the YhaM family.

Functionally, shows a 3'-5' exoribonuclease activity. This Listeria monocytogenes serotype 4b (strain CLIP80459) protein is 3'-5' exoribonuclease YhaM.